The chain runs to 397 residues: DnaJ homolog subfamily A member 4 (397 aa).

In terms of domain architecture, J spans E4 to Q70. At S18 the chain carries Phosphoserine. Residues G122–K206 form a CR-type zinc finger. Residues C135, C138, C151, C154, C178, C181, C194, and C197 each contribute to the Zn(2+) site. CXXCXGXG motif repeat units lie at residues C135–G142, C151–G158, C178–G185, and C194–K201. Residues E366–A380 are compositionally biased toward basic and acidic residues. Residues E366–A397 form a disordered region. C394 carries the post-translational modification Cysteine methyl ester. A lipid anchor (S-farnesyl cysteine) is attached at C394. A propeptide spans Q395–A397 (removed in mature form).

In terms of tissue distribution, specifically expressed in testis and heart.

It is found in the membrane. In Mus musculus (Mouse), this protein is DnaJ homolog subfamily A member 4 (Dnaja4).